The sequence spans 125 residues: Large ribosomal subunit protein bL12 (125 aa).

It belongs to the bacterial ribosomal protein bL12 family. Homodimer. Part of the ribosomal stalk of the 50S ribosomal subunit. Forms a multimeric L10(L12)X complex, where L10 forms an elongated spine to which 2 to 4 L12 dimers bind in a sequential fashion. Binds GTP-bound translation factors.

Its function is as follows. Forms part of the ribosomal stalk which helps the ribosome interact with GTP-bound translation factors. Is thus essential for accurate translation. The sequence is that of Large ribosomal subunit protein bL12 from Granulibacter bethesdensis (strain ATCC BAA-1260 / CGDNIH1).